A 311-amino-acid polypeptide reads, in one-letter code: 4-diphosphocytidyl-2-C-methyl-D-erythritol kinase (311 aa).

Lys9 is an active-site residue. 95-105 (PLGAGLAGGST) contacts ATP. Residue Asp137 is part of the active site.

It belongs to the GHMP kinase family. IspE subfamily.

The enzyme catalyses 4-CDP-2-C-methyl-D-erythritol + ATP = 4-CDP-2-C-methyl-D-erythritol 2-phosphate + ADP + H(+). Its pathway is isoprenoid biosynthesis; isopentenyl diphosphate biosynthesis via DXP pathway; isopentenyl diphosphate from 1-deoxy-D-xylulose 5-phosphate: step 3/6. Functionally, catalyzes the phosphorylation of the position 2 hydroxy group of 4-diphosphocytidyl-2C-methyl-D-erythritol. The polypeptide is 4-diphosphocytidyl-2-C-methyl-D-erythritol kinase (Thermosynechococcus vestitus (strain NIES-2133 / IAM M-273 / BP-1)).